Here is a 349-residue protein sequence, read N- to C-terminus: Isopentenyl-diphosphate delta-isomerase (349 aa).

Arginine 7 to lysine 8 contributes to the substrate binding site. Residues serine 65, serine 66–threonine 68, serine 96, and asparagine 124 contribute to the FMN site. Residue serine 96–arginine 98 coordinates substrate. Glutamine 159 provides a ligand contact to substrate. Mg(2+) is bound at residue glutamate 160. FMN contacts are provided by residues lysine 191, threonine 221, glycine 271–arginine 273, and alanine 292–alanine 293.

It belongs to the IPP isomerase type 2 family. As to quaternary structure, homooctamer. Dimer of tetramers. FMN serves as cofactor. NADPH is required as a cofactor. Requires Mg(2+) as cofactor.

Its subcellular location is the cytoplasm. It carries out the reaction isopentenyl diphosphate = dimethylallyl diphosphate. In terms of biological role, involved in the biosynthesis of isoprenoids. Catalyzes the 1,3-allylic rearrangement of the homoallylic substrate isopentenyl (IPP) to its allylic isomer, dimethylallyl diphosphate (DMAPP). This Synechocystis sp. (strain ATCC 27184 / PCC 6803 / Kazusa) protein is Isopentenyl-diphosphate delta-isomerase.